Reading from the N-terminus, the 130-residue chain is U-scoloptoxin(16)-Er4a (130 aa).

The N-terminal stretch at 1-26 (MNTVSVVQFLAVGCAVFVLYGRGVFA) is a signal peptide.

Belongs to the scoloptoxin-16 family. Contains 3 disulfide bonds. In terms of tissue distribution, expressed by the venom gland.

The protein localises to the secreted. In Ethmostigmus rubripes (Giant centipede), this protein is U-scoloptoxin(16)-Er4a.